The primary structure comprises 308 residues: Glutaminase (308 aa).

Substrate contacts are provided by Ser66, Asn117, Glu162, Asn169, Tyr193, Tyr244, and Val262.

It belongs to the glutaminase family. Homotetramer.

It catalyses the reaction L-glutamine + H2O = L-glutamate + NH4(+). The polypeptide is Glutaminase (Natranaerobius thermophilus (strain ATCC BAA-1301 / DSM 18059 / JW/NM-WN-LF)).